A 290-amino-acid chain; its full sequence is 33 kDa chaperonin (290 aa).

Disulfide bonds link C231–C233 and C264–C267.

It belongs to the HSP33 family. In terms of processing, under oxidizing conditions two disulfide bonds are formed involving the reactive cysteines. Under reducing conditions zinc is bound to the reactive cysteines and the protein is inactive.

It is found in the cytoplasm. Its function is as follows. Redox regulated molecular chaperone. Protects both thermally unfolding and oxidatively damaged proteins from irreversible aggregation. Plays an important role in the bacterial defense system toward oxidative stress. The chain is 33 kDa chaperonin from Photorhabdus laumondii subsp. laumondii (strain DSM 15139 / CIP 105565 / TT01) (Photorhabdus luminescens subsp. laumondii).